The sequence spans 283 residues: MSIDAKLSRQASGSKAGVACVPDAYSFSEARSPGTRFALMLSAVAAGLAGGAMLHSAMSATSALTGLFIVLALAGGFLSTWSPCGYSSLSLLRPAGRYSFASVLRWSPTFFTHALGYAIGAVVLGGALGMAGWLLFSSLPFSYMVAGMAVLALGYGAHQFGFMKMPYPQRRAQVPHDARFRFRSSVIGLLYGYALGMNYLTYVQTPILYIVTGVALFCGDVKTAIVIIGIFNIGRCLPVAVNFLPVKNVTVQVWLARWQERAVEVDGFLLLSVGSAALMLLVL.

The next 7 membrane-spanning stretches (helical) occupy residues 37-57 (FALM…LHSA), 58-78 (MSAT…GGFL), 116-136 (GYAI…WLLF), 143-163 (YMVA…FGFM), 187-207 (IGLL…QTPI), 210-230 (IVTG…IIGI), and 263-283 (VEVD…LLVL).

It is found in the cell membrane. Its pathway is one-carbon metabolism; methylamine degradation. The chain is Methylamine utilization protein MauF (mauF) from Methylobacillus flagellatus (strain ATCC 51484 / DSM 6875 / VKM B-1610 / KT).